Here is a 335-residue protein sequence, read N- to C-terminus: Ketol-acid reductoisomerase (NADP(+)) (335 aa).

The region spanning 2-182 (VEMFYDKDAD…GCTRAGVIET (181 aa)) is the KARI N-terminal Rossmann domain. NADP(+)-binding positions include 25–28 (YGSQ), Arg48, Ser51, and 83–86 (DEIQ). His108 is a catalytic residue. Gly134 serves as a coordination point for NADP(+). The 146-residue stretch at 183–328 (TFREETETDL…KKLRAMMPWL (146 aa)) folds into the KARI C-terminal knotted domain. Residues Asp191, Glu195, Glu227, and Glu231 each contribute to the Mg(2+) site. Position 252 (Ser252) interacts with substrate.

Belongs to the ketol-acid reductoisomerase family. Mg(2+) serves as cofactor.

It catalyses the reaction (2R)-2,3-dihydroxy-3-methylbutanoate + NADP(+) = (2S)-2-acetolactate + NADPH + H(+). The catalysed reaction is (2R,3R)-2,3-dihydroxy-3-methylpentanoate + NADP(+) = (S)-2-ethyl-2-hydroxy-3-oxobutanoate + NADPH + H(+). Its pathway is amino-acid biosynthesis; L-isoleucine biosynthesis; L-isoleucine from 2-oxobutanoate: step 2/4. The protein operates within amino-acid biosynthesis; L-valine biosynthesis; L-valine from pyruvate: step 2/4. Involved in the biosynthesis of branched-chain amino acids (BCAA). Catalyzes an alkyl-migration followed by a ketol-acid reduction of (S)-2-acetolactate (S2AL) to yield (R)-2,3-dihydroxy-isovalerate. In the isomerase reaction, S2AL is rearranged via a Mg-dependent methyl migration to produce 3-hydroxy-3-methyl-2-ketobutyrate (HMKB). In the reductase reaction, this 2-ketoacid undergoes a metal-dependent reduction by NADPH to yield (R)-2,3-dihydroxy-isovalerate. The sequence is that of Ketol-acid reductoisomerase (NADP(+)) from Methanococcoides burtonii (strain DSM 6242 / NBRC 107633 / OCM 468 / ACE-M).